The primary structure comprises 134 residues: Cytochrome b5 (134 aa).

In terms of domain architecture, Cytochrome b5 heme-binding spans 5-81 (KKVLGFEEVS…MEKYYIGEID (77 aa)). Histidine 40 and histidine 64 together coordinate heme. The chain crosses the membrane as a helical span at residues 107-127 (FMIKILQFLVPILILGLALVV).

This sequence belongs to the cytochrome b5 family.

The protein localises to the endoplasmic reticulum membrane. It is found in the microsome membrane. Its function is as follows. Membrane bound hemoprotein which function as an electron carrier for several membrane bound oxygenases. This is Cytochrome b5 (CYB5) from Brassica oleracea var. botrytis (Cauliflower).